The sequence spans 359 residues: Probable D-xylulose reductase A (359 aa).

Residues C47, H72, and E73 each coordinate Zn(2+). An NAD(+)-binding site is contributed by 182–187; the sequence is GAGPVG.

Belongs to the zinc-containing alcohol dehydrogenase family. Requires Zn(2+) as cofactor.

The catalysed reaction is xylitol + NAD(+) = D-xylulose + NADH + H(+). The protein operates within carbohydrate degradation; L-arabinose degradation via L-arabinitol; D-xylulose 5-phosphate from L-arabinose (fungal route): step 4/5. In terms of biological role, xylitol dehydrogenase which catalyzes the conversion of xylitol to D-xylulose. Xylose is a major component of hemicelluloses such as xylan. Most fungi utilize D-xylose via three enzymatic reactions, xylose reductase (XR), xylitol dehydrogenase (XDH), and xylulokinase, to form xylulose 5-phosphate, which enters pentose phosphate pathway. In Emericella nidulans (strain FGSC A4 / ATCC 38163 / CBS 112.46 / NRRL 194 / M139) (Aspergillus nidulans), this protein is Probable D-xylulose reductase A (xdhA).